Here is a 301-residue protein sequence, read N- to C-terminus: Probable alpha-L-glutamate ligase (301 aa).

The 184-residue stretch at 104-287 (LQLLSRKGVG…IAGMIIEYIE (184 aa)) folds into the ATP-grasp domain. ATP is bound by residues K141, 178–179 (EY), D187, and 211–213 (RSN). Mg(2+) is bound by residues D248, E260, and N262. The Mn(2+) site is built by D248, E260, and N262.

It belongs to the RimK family. Mg(2+) is required as a cofactor. Mn(2+) serves as cofactor.

The protein is Probable alpha-L-glutamate ligase of Photobacterium profundum (strain SS9).